Here is a 175-residue protein sequence, read N- to C-terminus: Transcription factor E (175 aa).

Positions 3 to 88 (ENPLIQQVLF…TWKPSLEKVP (86 aa)) constitute an HTH TFE/IIEalpha-type domain.

It belongs to the TFE family. Monomer. Interaction with RNA polymerase subunits RpoF and RpoE is necessary for Tfe stimulatory transcription activity. Able to interact with Tbp and RNA polymerase in the absence of DNA promoter. Interacts both with the preinitiation and elongation complexes.

Functionally, transcription factor that plays a role in the activation of archaeal genes transcribed by RNA polymerase. Facilitates transcription initiation by enhancing TATA-box recognition by TATA-box-binding protein (Tbp), and transcription factor B (Tfb) and RNA polymerase recruitment. Not absolutely required for transcription in vitro, but particularly important in cases where Tbp or Tfb function is not optimal. It dynamically alters the nucleic acid-binding properties of RNA polymerases by stabilizing the initiation complex and destabilizing elongation complexes. Seems to translocate with the RNA polymerase following initiation and acts by binding to the non template strand of the transcription bubble in elongation complexes. In Methanococcus maripaludis (strain DSM 14266 / JCM 13030 / NBRC 101832 / S2 / LL), this protein is Transcription factor E.